The following is a 713-amino-acid chain: MASQGSVTAALRVAEVLESIANRCVGPEGGQVLCTKPTGEVLLSRDGGCLLEALHLEHPLARMIVACVSSHLKKTGDGAKTFIIFLCHLLRGLHAIGEKGKDSFTSENIQSHERHWKNCCQWKSISQALQTFQTQTLGCIVDRSLSRHYLSVFSSSTEGRKLCRHSLELLLEAYFCGRVGRNNHRFISQLMCDYVFKCMACESGVEVFELLDHCFAELNVGVTGLPVSDSRIIDGLVLPRDFSMYCPADGDIRMVIVTEILQPQFSSAGSEFVLNSETQFQASQCWITDRTKTVMNHLRGQNVKLLLTSVKQPDLVIYCARLNSISVVECLSAEEVSLVQRITGLSPCVLPEVASQCEISDSTLVKFCKPLILRSKRYVHLGLISTCAFIPHSMVLCGPVLGLVEQHERAFHGAFKMLRQLFTDLDLNYIIQTKQQCNPSPLAYDNSRERNHSPETDKYQDIVAKSKNKLETQTHLEVYSGLGASDTELRAGKPWSAHKKTPIAPSQTDEMLKCLPPERSGIIDNCDLSIENHSTGNPTAEDTGTEISFEHLQVSDNAGKGYTLPVMRKSLDTCTCQGYCSSTVPAGCVLPVGGSFEILMSYYLLSYAKQCRQSDETVISMLIADALLGIPKILYKPKKGKDSFPHIYMRSLHALQASQPMVSGQSGFESVAGKYQLLTSVLQCLMKILTIDLIINIKRQPQKTADQESEDEF.

It belongs to the TCP-1 chaperonin family. Component of a complex composed at least of MKKS, BBS10, BBS12, TCP1, CCT2, CCT3, CCT4, CCT5 and CCT8.

The protein localises to the cell projection. It is found in the cilium. In terms of biological role, probable molecular chaperone that assists the folding of proteins upon ATP hydrolysis. Plays a role in the assembly of BBSome, a complex involved in ciliogenesis regulating transports vesicles to the cilia. Involved in adipogenic differentiation. The chain is BBSome complex assembly protein BBS10 (Bbs10) from Mus musculus (Mouse).